The chain runs to 93 residues: uncharacterized protein (93 aa).

This is an uncharacterized protein from Acidianus sp. F28 (AFV-2).